A 340-amino-acid polypeptide reads, in one-letter code: Dihydroorotate dehydrogenase (quinone) (340 aa).

FMN contacts are provided by residues 67–71 (AGFDK) and Thr91. Position 71 (Lys71) interacts with substrate. Residue 116 to 120 (NRMGF) participates in substrate binding. Positions 143 and 176 each coordinate FMN. Asn176 provides a ligand contact to substrate. Ser179 serves as the catalytic Nucleophile. Asn181 contributes to the substrate binding site. Residues Lys217 and Thr245 each coordinate FMN. Substrate is bound at residue 246–247 (NT). Residues Gly267, Gly296, and 317-318 (YT) contribute to the FMN site.

This sequence belongs to the dihydroorotate dehydrogenase family. Type 2 subfamily. Monomer. FMN is required as a cofactor.

It is found in the cell membrane. It carries out the reaction (S)-dihydroorotate + a quinone = orotate + a quinol. The protein operates within pyrimidine metabolism; UMP biosynthesis via de novo pathway; orotate from (S)-dihydroorotate (quinone route): step 1/1. Functionally, catalyzes the conversion of dihydroorotate to orotate with quinone as electron acceptor. The chain is Dihydroorotate dehydrogenase (quinone) from Christiangramia forsetii (strain DSM 17595 / CGMCC 1.15422 / KT0803) (Gramella forsetii).